We begin with the raw amino-acid sequence, 211 residues long: MAVVSLLLFGGLWSAVGSSNLAVVTCGSVVKLLNTRHNVRLHSHDVRYGSGSGQQSVTGVTSVDDSNSYWRIRGKTATVCERGTPIRCGQPIRLTHVNTGRNLHSHHFTSPLSGNQEVSAFGEEGEGDYLDDWTVLCNGPYWVRDGEVRFKHSSTEVLLSVTGEQYGRPISGQKEVHGMAQPSQNNYWKAMEGIFMKPSELLKAEGHHTEL.

A signal peptide spans 1–18 (MAVVSLLLFGGLWSAVGS). MIR domains are found at residues 21-75 (LAVV…IRGK), 83-138 (GTPI…VLCN), and 139-193 (GPYW…AMEG).

The protein localises to the secreted. The polypeptide is Stromal cell-derived factor 2 (SDF2) (Bos taurus (Bovine)).